A 576-amino-acid chain; its full sequence is Proline--tRNA ligase (576 aa).

It belongs to the class-II aminoacyl-tRNA synthetase family. ProS type 1 subfamily. Homodimer.

The protein localises to the cytoplasm. It carries out the reaction tRNA(Pro) + L-proline + ATP = L-prolyl-tRNA(Pro) + AMP + diphosphate. Functionally, catalyzes the attachment of proline to tRNA(Pro) in a two-step reaction: proline is first activated by ATP to form Pro-AMP and then transferred to the acceptor end of tRNA(Pro). As ProRS can inadvertently accommodate and process non-cognate amino acids such as alanine and cysteine, to avoid such errors it has two additional distinct editing activities against alanine. One activity is designated as 'pretransfer' editing and involves the tRNA(Pro)-independent hydrolysis of activated Ala-AMP. The other activity is designated 'posttransfer' editing and involves deacylation of mischarged Ala-tRNA(Pro). The misacylated Cys-tRNA(Pro) is not edited by ProRS. This chain is Proline--tRNA ligase, found in Thiobacillus denitrificans (strain ATCC 25259 / T1).